Reading from the N-terminus, the 351-residue chain is Protein IQ-DOMAIN 27 (351 aa).

The segment at 15–37 (KKSKDRSHVSGGDSVKGGDHSGD) is disordered. The calmodulin-binding stretch occupies residues 98–114 (EERWAAVKIQKVFRGSL). 2 consecutive IQ domains span residues 99-127 (ERWA…GIVK) and 128-150 (LQAL…SIQT). The Nuclear localization signal signature appears at 191-198 (DRRTKIVE). A compositionally biased stretch (basic residues) spans 299-310 (SFKAKVRSHSAP). The tract at residues 299–351 (SFKAKVRSHSAPRQRSERQRLSLDEVMASKSSVSGVSMSHQHPPRHSCSCDPL) is disordered. Over residues 312 to 321 (QRSERQRLSL) the composition is skewed to basic and acidic residues. Residues 324–337 (VMASKSSVSGVSMS) show a composition bias toward low complexity.

Belongs to the IQD family. As to quaternary structure, binds to multiple calmodulin (CaM) in the presence of Ca(2+) and CaM-like proteins.

The protein localises to the nucleus. It localises to the nucleus envelope. It is found in the cytoplasm. Its subcellular location is the cytoskeleton. In terms of biological role, may be involved in cooperative interactions with calmodulins or calmodulin-like proteins. Recruits calmodulin proteins to microtubules, thus being a potential scaffold in cellular signaling and trafficking. May associate with nucleic acids and regulate gene expression at the transcriptional or post-transcriptional level. The polypeptide is Protein IQ-DOMAIN 27 (Arabidopsis thaliana (Mouse-ear cress)).